Consider the following 290-residue polypeptide: Microtubule-associated protein P320 (290 aa).

8 consecutive repeats follow at residues 1–38, 39–76, 77–114, 115–152, 153–190, 191–228, 229–266, and 267–290; these read SEYRQKRTVGEEVTTDMRHVDESHFLTTTHEAYKPIDP, SEYRQKRTVGEEVTTNMRHVDESHFLTTTHEAYKPIDP, and SEYRQKRTVGEEVTTDMRHVDESH. The segment at 251–290 is disordered; sequence SHFLTTTHEAYKPIDPSEYRQKRTVGEEVTTDMRHVDESH. Residues 259-290 are compositionally biased toward basic and acidic residues; sequence EAYKPIDPSEYRQKRTVGEEVTTDMRHVDESH.

Its subcellular location is the cytoplasm. It localises to the cytoskeleton. This is Microtubule-associated protein P320 from Trypanosoma brucei brucei.